The chain runs to 99 residues: Aspartyl/glutamyl-tRNA(Asn/Gln) amidotransferase subunit C (99 aa).

Belongs to the GatC family. As to quaternary structure, heterotrimer of A, B and C subunits.

It catalyses the reaction L-glutamyl-tRNA(Gln) + L-glutamine + ATP + H2O = L-glutaminyl-tRNA(Gln) + L-glutamate + ADP + phosphate + H(+). The catalysed reaction is L-aspartyl-tRNA(Asn) + L-glutamine + ATP + H2O = L-asparaginyl-tRNA(Asn) + L-glutamate + ADP + phosphate + 2 H(+). Allows the formation of correctly charged Asn-tRNA(Asn) or Gln-tRNA(Gln) through the transamidation of misacylated Asp-tRNA(Asn) or Glu-tRNA(Gln) in organisms which lack either or both of asparaginyl-tRNA or glutaminyl-tRNA synthetases. The reaction takes place in the presence of glutamine and ATP through an activated phospho-Asp-tRNA(Asn) or phospho-Glu-tRNA(Gln). This Burkholderia ambifaria (strain MC40-6) protein is Aspartyl/glutamyl-tRNA(Asn/Gln) amidotransferase subunit C.